A 250-amino-acid chain; its full sequence is V-type proton ATPase subunit D (250 aa).

It belongs to the V-ATPase D subunit family. As to quaternary structure, V-ATPase is a heteromultimeric enzyme made up of two complexes: the ATP-hydrolytic V1 complex and the proton translocation V0 complex. The V1 complex consists of three catalytic AB heterodimers that form a heterohexamer, three peripheral stalks each consisting of EG heterodimers, one central rotor including subunits D and F, and the regulatory subunits C and H. The proton translocation complex V0 consists of the proton transport subunit a, a ring of proteolipid subunits c9c'', rotary subunit d, subunits e and f, and two accessory subunits ATP6AP1/Ac45 and ATP6AP2/PRR.

Functionally, subunit of the V1 complex of vacuolar(H+)-ATPase (V-ATPase), a multisubunit enzyme composed of a peripheral complex (V1) that hydrolyzes ATP and a membrane integral complex (V0) that translocates protons. V-ATPase is responsible for acidifying and maintaining the pH of intracellular compartments and in some cell types, is targeted to the plasma membrane, where it is responsible for acidifying the extracellular environment. The protein is V-type proton ATPase subunit D (VATPD) of Suberites domuncula (Sponge).